Reading from the N-terminus, the 98-residue chain is Tax1-binding protein 3 (98 aa).

N-acetylserine is present on serine 2. Residues 12–87 enclose the PDZ domain; that stretch reads VVQRVEIHKL…VVRLLVTRQS (76 aa).

In terms of assembly, interacts (via its PDZ domain) with GLS2. Interacts (via its PDZ domain) with RTKN (via the C-terminal region); this interaction facilitates Rho-mediated activation of the FOS serum response element (SRE). Interacts (via PDZ domain) with ARHGEF16. Interacts (via PDZ domain) with KCNJ4 (via C-terminus). Competes with LIN7A for KCNJ4 binding. Interacts (via its PDZ domain) with CTNNB1; this interaction inhibits the transcriptional activity of CTNNB1. Interacts with ADGRB2. Detected in kidney distal convoluted tubules (at protein level).

Its subcellular location is the cytoplasm. It localises to the nucleus. The protein localises to the cell membrane. Functionally, may regulate a number of protein-protein interactions by competing for PDZ domain binding sites. Binds CTNNB1 and may thereby act as an inhibitor of the Wnt signaling pathway. Competes with LIN7A for KCNJ4 binding, and thereby promotes KCNJ4 internalization. May play a role in the Rho signaling pathway. The sequence is that of Tax1-binding protein 3 from Rattus norvegicus (Rat).